The sequence spans 89 residues: MDFSQFNGAEQAHMSKVIEKKQMQDFMRLYSGLVEKCFNACAQDFTSKALTTNETTCVQNCTDKFLKHSERVGARFAEHNAEQMQGAGQ.

The short motif at 37–61 (CFNACAQDFTSKALTTNETTCVQNC) is the Twin CX3C motif element. Intrachain disulfides connect Cys37–Cys61 and Cys41–Cys57.

This sequence belongs to the small Tim family. Heterohexamer; composed of 3 copies of TIM9 and 3 copies of TIM10, named soluble 70 kDa complex. Associates with the TIM22 complex, whose core is composed of TIM22 and TIM54. Interacts with the transmembrane regions of multi-pass transmembrane proteins in transit.

It localises to the mitochondrion inner membrane. Its function is as follows. Mitochondrial intermembrane chaperone that participates in the import and insertion of multi-pass transmembrane proteins into the mitochondrial inner membrane. Also required for the transfer of beta-barrel precursors from the TOM complex to the sorting and assembly machinery (SAM complex) of the outer membrane. Acts as a chaperone-like protein that protects the hydrophobic precursors from aggregation and guide them through the mitochondrial intermembrane space. This is Mitochondrial import inner membrane translocase subunit TIM9 (TIM9) from Cryptococcus neoformans var. neoformans serotype D (strain B-3501A) (Filobasidiella neoformans).